Here is a 162-residue protein sequence, read N- to C-terminus: Gas vesicle protein I (162 aa).

The tract at residues 1 to 162 is disordered; that stretch reads MTGKQHQKHE…AERQRGGADE (162 aa). Basic and acidic residues-rich tracts occupy residues 22 to 37 and 47 to 64; these read INRD…QREK and RQSE…HDTQ. Polar residues-rich tracts occupy residues 65–74 and 81–110; these read SETQRGTQSK and TGGT…SHST. Basic and acidic residues-rich tracts occupy residues 122 to 142 and 151 to 162; these read ARER…EDKS and PKAERQRGGADE.

The protein belongs to the gas vesicle GvpI family. GvpF to GvpM interact with each other in vitro, and may form multi-subunit complex(es). Interacts with GvpC and GvpO.

The protein localises to the gas vesicle. Functionally, proteins GvpF to GvpM might be involved in nucleating gas vesicle formation. A minor component of the gas vesicle. Gas vesicles are hollow, gas filled proteinaceous nanostructures found in some microorganisms. They allow positioning of halobacteria at the optimal depth for growth in the poorly aerated, shallow brine pools of their habitat. Its function is as follows. Expression of a 9.5 kb mc-vac DNA fragment containing 2 divergently transcribed regions (gvpD-gvpE-gvpF-gvpG-gvpH-gvpI-gvpJ-gvpK-gvpL-gvpM and gvpA-gvpC-gvpN-gvpO) allows H.volcanii to produce gas vesicles. This chain is Gas vesicle protein I, found in Haloferax mediterranei (strain ATCC 33500 / DSM 1411 / JCM 8866 / NBRC 14739 / NCIMB 2177 / R-4) (Halobacterium mediterranei).